A 465-amino-acid polypeptide reads, in one-letter code: MDQPRKLHIKSFGCQMNVYDAQRMVDALAPEGFVETQSADDADLVILNTCHIREKAAEKVYSELGKLRLLKQDAASHGRRFEIAVAGCVAQAEGAEIIRRQPAVDVVVGPQSYHHLPELLEKARRDGRALETEFPIEDKFGVLPPPRPDAIRARGVSAFVTVQEGCDKFCSFCVVPYTRGAEMSRPVAKILDDVKRLIDNGVREITLIGQNVNAYHGEGPDDRPWTLGALLRHLASVPGVARLRYSTSHPLDVDDELIAAHRELPGLMPFVHLPVQSGSDAILAAMNRRHSADDYRRVIDRFRQADPSIAFSSDFIVGFPGETDRDFEATLALVTQIGYAGAYSFKYSPRPGTPAAELQEMVAPAVMDQRLEQLQGLIDSQQAAFNRASIGTTVDVLFERAARHPGQIVGRTAYLQPAHVMAADDIVGQVLPVTIHSLERYSLIGELVKPQPARPPKPLPVTTGA.

An MTTase N-terminal domain is found at R5–R125. The [4Fe-4S] cluster site is built by C14, C50, C88, C166, C170, and C173. The 231-residue stretch at R152 to Q382 folds into the Radical SAM core domain. Residues R387–K449 enclose the TRAM domain.

This sequence belongs to the methylthiotransferase family. MiaB subfamily. Monomer. The cofactor is [4Fe-4S] cluster.

Its subcellular location is the cytoplasm. It carries out the reaction N(6)-dimethylallyladenosine(37) in tRNA + (sulfur carrier)-SH + AH2 + 2 S-adenosyl-L-methionine = 2-methylsulfanyl-N(6)-dimethylallyladenosine(37) in tRNA + (sulfur carrier)-H + 5'-deoxyadenosine + L-methionine + A + S-adenosyl-L-homocysteine + 2 H(+). Functionally, catalyzes the methylthiolation of N6-(dimethylallyl)adenosine (i(6)A), leading to the formation of 2-methylthio-N6-(dimethylallyl)adenosine (ms(2)i(6)A) at position 37 in tRNAs that read codons beginning with uridine. The polypeptide is tRNA-2-methylthio-N(6)-dimethylallyladenosine synthase (Rhodopseudomonas palustris (strain BisA53)).